Here is an 827-residue protein sequence, read N- to C-terminus: Putative transcriptional regulatory protein C16G5.16 (827 aa).

The zn(2)-C6 fungal-type DNA-binding region spans 16-42 (CDECHRRKIKCDQRRPCSNCIAYNYEC). Disordered regions lie at residues 80-114 (LKLPSFLAPPNDKDSPVNQSPWKRSDSSKRSSSQD), 158-193 (TVPNPVQESNSSSSQPDPLSFPYLPPTPAEDEHKKP), and 794-827 (QPPSMTNQVAYPTVRDGSNNSPDHPSSSNSKRTE). The segment covering 102 to 112 (KRSDSSKRSSS) has biased composition (basic and acidic residues). Phosphoserine is present on S112. Low complexity-rich tracts occupy residues 159–179 (VPNPVQESNSSSSQPDPLSFP) and 811–827 (SNNSPDHPSSSNSKRTE).

This sequence belongs to the ASG1 family.

Its subcellular location is the cytoplasm. It is found in the nucleus. This Schizosaccharomyces pombe (strain 972 / ATCC 24843) (Fission yeast) protein is Putative transcriptional regulatory protein C16G5.16.